Consider the following 401-residue polypeptide: uncharacterized protein (401 aa).

Belongs to the serpin family.

Functionally, may act as an inhibitor for a host chymotrypsin-like protease. This is an uncharacterized protein from Acanthamoeba polyphaga mimivirus (APMV).